The chain runs to 614 residues: Jacalin-related lectin 14 (614 aa).

Jacalin-type lectin domains lie at 27–169 (VQKM…YFSW), 172–314 (PRKM…YFTT), 317–462 (PTKS…YFSP), and 468–611 (AEKL…HVVP).

Belongs to the jacalin lectin family.

This chain is Jacalin-related lectin 14 (JAL14), found in Arabidopsis thaliana (Mouse-ear cress).